The primary structure comprises 489 residues: Beta-1,3-glucosyltransferase (489 aa).

A topological domain (cytoplasmic) is located at residue Met1. Residues 2–22 (RPPALLALFSCSAAFALMSEE) form a helical; Signal-anchor for type II membrane protein membrane-spanning segment. The Lumenal segment spans residues 23–489 (IKEKVTPSQD…ETQKDPREEL (467 aa)). Asn78 carries an N-linked (GlcNAc...) asparagine glycan. Residues 486-489 (REEL) carry the Prevents secretion from ER motif.

Belongs to the glycosyltransferase 31 family.

Its subcellular location is the endoplasmic reticulum membrane. Its pathway is protein modification; protein glycosylation. Its function is as follows. O-glucosyltransferase that transfers glucose toward fucose with a beta-1,3 linkage. Specifically glucosylates O-linked fucosylglycan on TSP type-1 domains of proteins, thereby contributing to elongation of O-fucosylglycan. This is Beta-1,3-glucosyltransferase from Mus musculus (Mouse).